The sequence spans 307 residues: Ubiquitin recognition factor in ER-associated degradation protein 1 (307 aa).

Position 1 is an N-acetylmethionine (Met-1). Residues Ser-129, Ser-231, Ser-245, Ser-247, and Ser-299 each carry the phosphoserine modification. 2 disordered regions span residues Gly-230–Lys-255 and Glu-282–Pro-307.

It belongs to the UFD1 family. Interacts with USP13. Heterodimer with NPLOC4, this heterodimer binds VCP and inhibits Golgi membrane fusion. Interacts with ZFAND2B; probably through VCP.

It is found in the nucleus. Its subcellular location is the cytoplasm. The protein resides in the cytosol. Its pathway is protein degradation; proteasomal ubiquitin-dependent pathway. In terms of biological role, essential component of the ubiquitin-dependent proteolytic pathway which degrades ubiquitin fusion proteins. The ternary complex containing UFD1, VCP and NPLOC4 binds ubiquitinated proteins and is necessary for the export of misfolded proteins from the ER to the cytoplasm, where they are degraded by the proteasome. The NPLOC4-UFD1-VCP complex regulates spindle disassembly at the end of mitosis and is necessary for the formation of a closed nuclear envelope. It may be involved in the development of some ectoderm-derived structures. Acts as a negative regulator of type I interferon production via the complex formed with VCP and NPLOC4, which binds to RIGI and recruits RNF125 to promote ubiquitination and degradation of RIGI. The sequence is that of Ubiquitin recognition factor in ER-associated degradation protein 1 from Rattus norvegicus (Rat).